Here is a 164-residue protein sequence, read N- to C-terminus: SsrA-binding protein (164 aa).

The protein belongs to the SmpB family.

It localises to the cytoplasm. In terms of biological role, required for rescue of stalled ribosomes mediated by trans-translation. Binds to transfer-messenger RNA (tmRNA), required for stable association of tmRNA with ribosomes. tmRNA and SmpB together mimic tRNA shape, replacing the anticodon stem-loop with SmpB. tmRNA is encoded by the ssrA gene; the 2 termini fold to resemble tRNA(Ala) and it encodes a 'tag peptide', a short internal open reading frame. During trans-translation Ala-aminoacylated tmRNA acts like a tRNA, entering the A-site of stalled ribosomes, displacing the stalled mRNA. The ribosome then switches to translate the ORF on the tmRNA; the nascent peptide is terminated with the 'tag peptide' encoded by the tmRNA and targeted for degradation. The ribosome is freed to recommence translation, which seems to be the essential function of trans-translation. This chain is SsrA-binding protein, found in Shewanella sediminis (strain HAW-EB3).